A 468-amino-acid chain; its full sequence is ATP synthase subunit beta (468 aa).

155–162 is an ATP binding site; that stretch reads GGAGVGKT.

It belongs to the ATPase alpha/beta chains family. In terms of assembly, F-type ATPases have 2 components, CF(1) - the catalytic core - and CF(0) - the membrane proton channel. CF(1) has five subunits: alpha(3), beta(3), gamma(1), delta(1), epsilon(1). CF(0) has three main subunits: a(1), b(2) and c(9-12). The alpha and beta chains form an alternating ring which encloses part of the gamma chain. CF(1) is attached to CF(0) by a central stalk formed by the gamma and epsilon chains, while a peripheral stalk is formed by the delta and b chains.

Its subcellular location is the cell membrane. The catalysed reaction is ATP + H2O + 4 H(+)(in) = ADP + phosphate + 5 H(+)(out). Produces ATP from ADP in the presence of a proton gradient across the membrane. The catalytic sites are hosted primarily by the beta subunits. The sequence is that of ATP synthase subunit beta from Streptococcus pneumoniae (strain Taiwan19F-14).